We begin with the raw amino-acid sequence, 341 residues long: Cell division protein FtsX (341 aa).

The disordered stretch occupies residues 1–34; that stretch reads MSTTRTPKVSERVAPKPADPQPAKKKRGEDDDGP. The Cytoplasmic portion of the chain corresponds to 1–65; the sequence is MSTTRTPKVS…RRLGKQPIGS (65 aa). A helical membrane pass occupies residues 66–86; sequence FFTCLVMAVALSMPMGLSLLL. Residues 87–212 are Periplasmic-facing; it reads KNIEQLGGSW…LAAILKLGDR (126 aa). Residues 213–233 traverse the membrane as a helical segment; sequence FVFGLAVMLISALLLVIGNTI. Residues 234–263 lie on the Cytoplasmic side of the membrane; sequence RLHIENRRIEIEVIKLVGGTDAYVRRPFLY. Residues 264–284 traverse the membrane as a helical segment; the sequence is MGALYGLGAGLLAWGILAFGL. At 285–311 the chain is on the periplasmic side; sequence NWLNEAVVGLSGLYGSDFALGGVPASD. Residues 312–332 traverse the membrane as a helical segment; that stretch reads GLSLLIGAVLLGYIGAWIAVA. Residues 333 to 341 are Cytoplasmic-facing; sequence RHLNELAPR.

Belongs to the ABC-4 integral membrane protein family. FtsX subfamily. In terms of assembly, forms a membrane-associated complex with FtsE.

The protein resides in the cell inner membrane. In terms of biological role, part of the ABC transporter FtsEX involved in cellular division. This chain is Cell division protein FtsX, found in Pseudomonas putida (Arthrobacter siderocapsulatus).